Consider the following 545-residue polypeptide: CTP synthase (545 aa).

Residues 2–266 form an amidoligase domain region; it reads TTNYIFVTGG…DDYICKRFSL (265 aa). Ser14 serves as a coordination point for CTP. Ser14 is a UTP binding site. ATP-binding positions include 15–20 and Asp72; that span reads SLGKGI. Asp72 and Glu140 together coordinate Mg(2+). CTP is bound by residues 147–149, 187–192, and Lys223; these read DIE and KTKPTQ. Residues 187–192 and Lys223 contribute to the UTP site; that span reads KTKPTQ. ATP is bound at residue 239-241; sequence KDV. A Glutamine amidotransferase type-1 domain is found at 291 to 542; the sequence is TIGMVGKYIE…VKAANEHQKR (252 aa). Gly352 provides a ligand contact to L-glutamine. Catalysis depends on Cys379, which acts as the Nucleophile; for glutamine hydrolysis. L-glutamine is bound by residues 380–383, Glu403, and Arg470; that span reads LGMQ. Residues His515 and Glu517 contribute to the active site.

Belongs to the CTP synthase family. Homotetramer.

The enzyme catalyses UTP + L-glutamine + ATP + H2O = CTP + L-glutamate + ADP + phosphate + 2 H(+). The catalysed reaction is L-glutamine + H2O = L-glutamate + NH4(+). It catalyses the reaction UTP + NH4(+) + ATP = CTP + ADP + phosphate + 2 H(+). It participates in pyrimidine metabolism; CTP biosynthesis via de novo pathway; CTP from UDP: step 2/2. Allosterically activated by GTP, when glutamine is the substrate; GTP has no effect on the reaction when ammonia is the substrate. The allosteric effector GTP functions by stabilizing the protein conformation that binds the tetrahedral intermediate(s) formed during glutamine hydrolysis. Inhibited by the product CTP, via allosteric rather than competitive inhibition. Catalyzes the ATP-dependent amination of UTP to CTP with either L-glutamine or ammonia as the source of nitrogen. Regulates intracellular CTP levels through interactions with the four ribonucleotide triphosphates. The sequence is that of CTP synthase from Salmonella typhi.